A 72-amino-acid chain; its full sequence is High-potential iron-sulfur protein isozyme 1 (72 aa).

Ala-1 carries the post-translational modification N-carbamoylalanine; partial. Residues Cys-34, Cys-37, Cys-51, and Cys-65 each coordinate [4Fe-4S] cluster.

This sequence belongs to the high-potential iron-sulfur protein (HiPIP) family. Homodimer.

Specific class of high-redox-potential 4Fe-4S ferredoxins. Functions in anaerobic electron transport in most purple and in some other photosynthetic bacteria and in at least one genus (Paracoccus) of halophilic, denitrifying bacteria. In Ectothiorhodospira mobilis, this protein is High-potential iron-sulfur protein isozyme 1.